Consider the following 220-residue polypeptide: 7-cyano-7-deazaguanine synthase (220 aa).

Phe10–Leu20 contacts ATP. The Zn(2+) site is built by Cys186, Cys195, Cys198, and Cys201.

This sequence belongs to the QueC family. In terms of assembly, homodimer. Zn(2+) serves as cofactor.

It carries out the reaction 7-carboxy-7-deazaguanine + NH4(+) + ATP = 7-cyano-7-deazaguanine + ADP + phosphate + H2O + H(+). Its pathway is purine metabolism; 7-cyano-7-deazaguanine biosynthesis. Its function is as follows. Catalyzes the ATP-dependent conversion of 7-carboxy-7-deazaguanine (CDG) to 7-cyano-7-deazaguanine (preQ(0)). The sequence is that of 7-cyano-7-deazaguanine synthase from Bacillus thuringiensis (strain Al Hakam).